A 322-amino-acid chain; its full sequence is F-box protein At2g16300 (322 aa).

Positions 2 to 50 (ADWSLLPNDLLELIVGHLETSFEIVLFRSVCSSWRSVVPPQDQSRCLSI) constitute an F-box domain.

The chain is F-box protein At2g16300 from Arabidopsis thaliana (Mouse-ear cress).